The chain runs to 255 residues: Small ribosomal subunit protein uS2 (255 aa).

This sequence belongs to the universal ribosomal protein uS2 family.

This is Small ribosomal subunit protein uS2 from Streptococcus pyogenes serotype M3 (strain ATCC BAA-595 / MGAS315).